A 131-amino-acid chain; its full sequence is Protein Turandot M (131 aa).

Residues 1–23 form the signal peptide; the sequence is MNPAIYLSCLVVFSLLLLGKVNA.

It belongs to the Turandot family.

The protein resides in the secreted. In terms of biological role, a humoral factor that may play a role in stress tolerance. Requires Mekk1 expression in the fat body to regulate response to septic injury and consequent immune response. The protein is Protein Turandot M of Drosophila erecta (Fruit fly).